Here is a 194-residue protein sequence, read N- to C-terminus: A-type ATP synthase subunit E (194 aa).

It belongs to the V-ATPase E subunit family. Has multiple subunits with at least A(3), B(3), C, D, E, F, H, I and proteolipid K(x).

It localises to the cell membrane. Component of the A-type ATP synthase that produces ATP from ADP in the presence of a proton gradient across the membrane. The chain is A-type ATP synthase subunit E from Saccharolobus islandicus (strain M.16.27) (Sulfolobus islandicus).